The primary structure comprises 404 residues: uncharacterized protein (404 aa).

Transmembrane regions (helical) follow at residues 16 to 36 (FAFFAAGFNTFAILYCVQPLM), 49 to 69 (AASLSLSVTTMLLAVSMLVFG), 79 to 99 (PIMGISMLAASVLCLASAFSP), 110 to 130 (IQGVALAGLPSIAMAYLGEEI), 133 to 153 (GSLGSAMGLYISGNAIGAVFG), 166 to 186 (WHMAMGTIGVISLIASVIFFI), 221 to 241 (FLIGFLLLGSNVALFNYIVYV), 252 to 272 (AFSSWIFIVMIVGIFSSSFIG), 283 to 303 (ILVMNIFIVIAGALFTINNML), 307 to 327 (ILGIALFTFGFFGGHSVASSW), 342 to 362 (LYLFFYYAGSSVFGTIGGLFW), and 364 to 384 (GFHWLGVVGMITFMLLVALWL).

The protein belongs to the major facilitator superfamily.

Its subcellular location is the cell membrane. This is an uncharacterized protein from Bacillus subtilis (strain 168).